Reading from the N-terminus, the 102-residue chain is Small ribosomal subunit protein eS24 (102 aa).

It belongs to the eukaryotic ribosomal protein eS24 family.

The protein is Small ribosomal subunit protein eS24 of Methanococcus aeolicus (strain ATCC BAA-1280 / DSM 17508 / OCM 812 / Nankai-3).